Reading from the N-terminus, the 231-residue chain is uncharacterized protein (231 aa).

Transmembrane regions (helical) follow at residues 26-46, 56-76, 84-104, 112-132, 142-162, 163-183, and 206-226; these read TYSW…LTAQ, SLRL…SMFA, AGAL…ALLF, ITAF…GFVI, FFLF…FVGS, SALS…LTAY, and INGA…LLNI.

The protein belongs to the BI1 family.

It localises to the cell membrane. This is an uncharacterized protein from Deinococcus radiodurans (strain ATCC 13939 / DSM 20539 / JCM 16871 / CCUG 27074 / LMG 4051 / NBRC 15346 / NCIMB 9279 / VKM B-1422 / R1).